The primary structure comprises 442 residues: Protein PHYTOCHROME KINASE SUBSTRATE 2 (442 aa).

Residues 110 to 130 (IFVGPKQSSKNSSETPSLRSE) are disordered. The segment covering 121 to 130 (SSETPSLRSE) has biased composition (low complexity). Residues Ser-239 and Ser-245 each carry the phosphoserine modification. Residues 394 to 442 (VSGDSYTSMNRTPSYVPRFPVEANPTSTETRRRISSSSVSHTQSPFLYT) form a disordered region. Over residues 397–406 (DSYTSMNRTP) the composition is skewed to polar residues. Residues 428-442 (SSSSVSHTQSPFLYT) are compositionally biased toward low complexity.

This sequence belongs to the PKS family. As to quaternary structure, interacts with PKS1, RPT3, PHOT1 and PHOT2. In terms of tissue distribution, expressed in leaves, with the strongest expression on edges of the laminas. Not found in roots.

It is found in the cell membrane. Acts predominantly in the phot1 pathway. Involved in the leaf positioning and also in the phot2 pathway controlling the leaf flattening. Component of the network that modulates the very low-fluence response (VLFR) branch of phyA signaling. Regulates phytochrome-mediated photomorphogenesis and hypocotyl phototropism. May act by controlling auxin homeostasis. The sequence is that of Protein PHYTOCHROME KINASE SUBSTRATE 2 (PKS2) from Arabidopsis thaliana (Mouse-ear cress).